The following is a 179-amino-acid chain: Large ribosomal subunit protein uL5 (179 aa).

Belongs to the universal ribosomal protein uL5 family. In terms of assembly, part of the 50S ribosomal subunit; part of the 5S rRNA/L5/L18/L25 subcomplex. Contacts the 5S rRNA and the P site tRNA. Forms a bridge to the 30S subunit in the 70S ribosome.

Functionally, this is one of the proteins that bind and probably mediate the attachment of the 5S RNA into the large ribosomal subunit, where it forms part of the central protuberance. In the 70S ribosome it contacts protein S13 of the 30S subunit (bridge B1b), connecting the 2 subunits; this bridge is implicated in subunit movement. Contacts the P site tRNA; the 5S rRNA and some of its associated proteins might help stabilize positioning of ribosome-bound tRNAs. The polypeptide is Large ribosomal subunit protein uL5 (Rickettsia typhi (strain ATCC VR-144 / Wilmington)).